The primary structure comprises 212 residues: Leucyl/phenylalanyl-tRNA--protein transferase (212 aa).

It belongs to the L/F-transferase family.

The protein resides in the cytoplasm. It catalyses the reaction N-terminal L-lysyl-[protein] + L-leucyl-tRNA(Leu) = N-terminal L-leucyl-L-lysyl-[protein] + tRNA(Leu) + H(+). The enzyme catalyses N-terminal L-arginyl-[protein] + L-leucyl-tRNA(Leu) = N-terminal L-leucyl-L-arginyl-[protein] + tRNA(Leu) + H(+). The catalysed reaction is L-phenylalanyl-tRNA(Phe) + an N-terminal L-alpha-aminoacyl-[protein] = an N-terminal L-phenylalanyl-L-alpha-aminoacyl-[protein] + tRNA(Phe). Functionally, functions in the N-end rule pathway of protein degradation where it conjugates Leu, Phe and, less efficiently, Met from aminoacyl-tRNAs to the N-termini of proteins containing an N-terminal arginine or lysine. This is Leucyl/phenylalanyl-tRNA--protein transferase from Jannaschia sp. (strain CCS1).